Consider the following 274-residue polypeptide: Shikimate kinase (274 aa).

An ATP-binding site is contributed by 86–96; it reads PVGKGLKSSSA.

It belongs to the GHMP kinase family. Archaeal shikimate kinase subfamily.

The protein localises to the cytoplasm. It carries out the reaction shikimate + ATP = 3-phosphoshikimate + ADP + H(+). Its pathway is metabolic intermediate biosynthesis; chorismate biosynthesis; chorismate from D-erythrose 4-phosphate and phosphoenolpyruvate: step 5/7. This Pyrococcus abyssi (strain GE5 / Orsay) protein is Shikimate kinase (aroK).